Reading from the N-terminus, the 308-residue chain is MNHLTGLFGLPASTLVELLDLATGYREGLNREPETFAPLLSNRRIALVFFENSTRTRFSFELAARHLGAGTLSFTAASSSVSKGETLSDTIRNLEAMKVDAFVLRHPSSGAAEFVASITKRPVINAGDGTHEHPTQALLDLLTLREYFGKIEGLKIMILGDILHSRVARSNIIGLKTLGAEIAVCAPTTLLPGRIDQLGVRVFTGIDEALAWADAAIVLRLQLERATGGYIPSLEEYSASYGLTDEKLDRLKRLMPVLHPGPINREIEISNLVADRIQPPGYSSSMLMEQVTNGVAVRMAVLHRLLAK.

Carbamoyl phosphate contacts are provided by R55 and T56. L-aspartate is bound at residue K83. Positions 105, 133, and 136 each coordinate carbamoyl phosphate. L-aspartate-binding residues include R166 and R220. Positions 261 and 262 each coordinate carbamoyl phosphate.

Belongs to the aspartate/ornithine carbamoyltransferase superfamily. ATCase family. As to quaternary structure, heterododecamer (2C3:3R2) of six catalytic PyrB chains organized as two trimers (C3), and six regulatory PyrI chains organized as three dimers (R2).

The enzyme catalyses carbamoyl phosphate + L-aspartate = N-carbamoyl-L-aspartate + phosphate + H(+). The protein operates within pyrimidine metabolism; UMP biosynthesis via de novo pathway; (S)-dihydroorotate from bicarbonate: step 2/3. Its function is as follows. Catalyzes the condensation of carbamoyl phosphate and aspartate to form carbamoyl aspartate and inorganic phosphate, the committed step in the de novo pyrimidine nucleotide biosynthesis pathway. This is Aspartate carbamoyltransferase catalytic subunit from Chlorobaculum tepidum (strain ATCC 49652 / DSM 12025 / NBRC 103806 / TLS) (Chlorobium tepidum).